A 439-amino-acid polypeptide reads, in one-letter code: Probable eukaryotic translation initiation factor 5-1 (439 aa).

Residue 29–36 (GRGNGIKT) coordinates GTP. The disordered stretch occupies residues 143–245 (LKNPPEQKKS…REAAEKRMKE (103 aa)). Residues 147–186 (PEQKKSSKDKKSMRRAEKERLREGEAADEEMRKLKKEAAS) are compositionally biased toward basic and acidic residues. Over residues 214 to 228 (DENDQADSEEDDDDV) the composition is skewed to acidic residues. A Phosphothreonine modification is found at Thr-232. Residues 234–245 (TSREAAEKRMKE) show a composition bias toward basic and acidic residues. A W2 domain is found at 283–439 (KIPENAHEKL…QNAESESEEE (157 aa)). Residues Ser-434 and Ser-436 each carry the phosphoserine modification.

This sequence belongs to the eIF-2-beta/eIF-5 family.

Catalyzes the hydrolysis of GTP bound to the 40S ribosomal initiation complex (40S.mRNA.Met-tRNA[F].eIF-2.GTP) with the subsequent joining of a 60S ribosomal subunit resulting in the release of eIF-2 and the guanine nucleotide. The subsequent joining of a 60S ribosomal subunit results in the formation of a functional 80S initiation complex (80S.mRNA.Met-tRNA[F]). This Arabidopsis thaliana (Mouse-ear cress) protein is Probable eukaryotic translation initiation factor 5-1.